The sequence spans 576 residues: Glutamine--tRNA ligase (576 aa).

The 'HIGH' region signature appears at 47–57 (PEPNGYLHIGH). ATP contacts are provided by residues 48–50 (EPN) and 54–60 (HIGHAKS). Asp-80 and Tyr-229 together coordinate L-glutamine. ATP contacts are provided by residues Thr-248 and 283–284 (RL). Residues 290-294 (ITSKR) carry the 'KMSKS' region motif.

It belongs to the class-I aminoacyl-tRNA synthetase family. In terms of assembly, monomer.

Its subcellular location is the cytoplasm. It catalyses the reaction tRNA(Gln) + L-glutamine + ATP = L-glutaminyl-tRNA(Gln) + AMP + diphosphate. The polypeptide is Glutamine--tRNA ligase (Ralstonia pickettii (strain 12J)).